The primary structure comprises 290 residues: 4-hydroxy-tetrahydrodipicolinate synthase (290 aa).

Thr44 is a pyruvate binding site. The active-site Proton donor/acceptor is the Tyr132. Lys160 functions as the Schiff-base intermediate with substrate in the catalytic mechanism. Pyruvate is bound at residue Ile202.

This sequence belongs to the DapA family. In terms of assembly, homotetramer; dimer of dimers.

The protein resides in the cytoplasm. It carries out the reaction L-aspartate 4-semialdehyde + pyruvate = (2S,4S)-4-hydroxy-2,3,4,5-tetrahydrodipicolinate + H2O + H(+). The protein operates within amino-acid biosynthesis; L-lysine biosynthesis via DAP pathway; (S)-tetrahydrodipicolinate from L-aspartate: step 3/4. In terms of biological role, catalyzes the condensation of (S)-aspartate-beta-semialdehyde [(S)-ASA] and pyruvate to 4-hydroxy-tetrahydrodipicolinate (HTPA). The chain is 4-hydroxy-tetrahydrodipicolinate synthase from Geobacter sulfurreducens (strain ATCC 51573 / DSM 12127 / PCA).